Reading from the N-terminus, the 90-residue chain is Progonadoliberin-3 (90 aa).

Positions 1 to 23 (MEASSRVTVQVLLLALVVQVTLS) are cleaved as a signal peptide. Gln24 is modified (pyrrolidone carboxylic acid). Gly33 carries the post-translational modification Glycine amide.

This sequence belongs to the GnRH family.

It is found in the secreted. Its function is as follows. Stimulates the secretion of gonadotropins. In Sparus aurata (Gilthead sea bream), this protein is Progonadoliberin-3 (gnrh3).